A 203-amino-acid polypeptide reads, in one-letter code: Histidine biosynthesis bifunctional protein HisIE (203 aa).

Positions 1-114 (MLTEQQRREL…FGDASHQWLF (114 aa)) are phosphoribosyl-AMP cyclohydrolase. Residues 115–203 (LYQLEQLLAE…VIDDLRKRHQ (89 aa)) are phosphoribosyl-ATP pyrophosphohydrolase.

This sequence in the N-terminal section; belongs to the PRA-CH family. It in the C-terminal section; belongs to the PRA-PH family.

The protein localises to the cytoplasm. It catalyses the reaction 1-(5-phospho-beta-D-ribosyl)-ATP + H2O = 1-(5-phospho-beta-D-ribosyl)-5'-AMP + diphosphate + H(+). The enzyme catalyses 1-(5-phospho-beta-D-ribosyl)-5'-AMP + H2O = 1-(5-phospho-beta-D-ribosyl)-5-[(5-phospho-beta-D-ribosylamino)methylideneamino]imidazole-4-carboxamide. The protein operates within amino-acid biosynthesis; L-histidine biosynthesis; L-histidine from 5-phospho-alpha-D-ribose 1-diphosphate: step 2/9. It functions in the pathway amino-acid biosynthesis; L-histidine biosynthesis; L-histidine from 5-phospho-alpha-D-ribose 1-diphosphate: step 3/9. In Salmonella typhi, this protein is Histidine biosynthesis bifunctional protein HisIE (hisI).